The chain runs to 135 residues: uncharacterized protein (135 aa).

The HotDog ACOT-type domain maps to 8-123 (PQGTIVLKTL…IFIYVAIDET (116 aa)).

It belongs to the acyl coenzyme A hydrolase family.

This is an uncharacterized protein from Buchnera aphidicola subsp. Schizaphis graminum (strain Sg).